Reading from the N-terminus, the 324-residue chain is MSLLRSLRFFPVACTGRSARAVLLQPSQPWHTLHAGPSLSSSASSKELLMKLRRTTGYSFVNCKKALETCGGDLKQAEAWLHKQAQKEGWSKAAKLHGRKTKEGLIGLLQEENTAVLVEVNCETDFVSRNVKFQQLVQQVALGTMAHCQNLTDQLSTYSKGFLNSSELSELAAGPDGEGSLKDQLALAIGTLGENMSLKRAAWVKVPSGFYVGSYVHGEMQSPSLQNLVLGKYGALVICQTPEQITNLEEVGRRLGQHVVGMAPLSVGSLDDEPGGETETRMLPQPYLLDPSITLGQYVQPQGVTVVDFVRFECGEGEQVAEAE.

The transit peptide at 1 to 44 directs the protein to the mitochondrion; it reads MSLLRSLRFFPVACTGRSARAVLLQPSQPWHTLHAGPSLSSSAS. N6-succinyllysine occurs at positions 75 and 132. Ser-269 carries the post-translational modification Phosphoserine.

It belongs to the EF-Ts family.

The protein resides in the mitochondrion. Its function is as follows. Associates with the EF-Tu.GDP complex and induces the exchange of GDP to GTP. It remains bound to the aminoacyl-tRNA.EF-Tu.GTP complex up to the GTP hydrolysis stage on the ribosome. The sequence is that of Elongation factor Ts, mitochondrial (Tsfm) from Rattus norvegicus (Rat).